An 82-amino-acid chain; its full sequence is ATP synthase subunit c (82 aa).

Helical transmembrane passes span 7 to 27 and 57 to 77; these read AASVLAAALAVGLAAIGPGIG and LAFMEALTIYGLVVALVLLFA.

It belongs to the ATPase C chain family. As to quaternary structure, F-type ATPases have 2 components, F(1) - the catalytic core - and F(0) - the membrane proton channel. F(1) has five subunits: alpha(3), beta(3), gamma(1), delta(1), epsilon(1). F(0) has four main subunits: a(1), b(1), b'(1) and c(10-14). The alpha and beta chains form an alternating ring which encloses part of the gamma chain. F(1) is attached to F(0) by a central stalk formed by the gamma and epsilon chains, while a peripheral stalk is formed by the delta, b and b' chains.

It localises to the cellular thylakoid membrane. Functionally, f(1)F(0) ATP synthase produces ATP from ADP in the presence of a proton or sodium gradient. F-type ATPases consist of two structural domains, F(1) containing the extramembraneous catalytic core and F(0) containing the membrane proton channel, linked together by a central stalk and a peripheral stalk. During catalysis, ATP synthesis in the catalytic domain of F(1) is coupled via a rotary mechanism of the central stalk subunits to proton translocation. In terms of biological role, key component of the F(0) channel; it plays a direct role in translocation across the membrane. A homomeric c-ring of between 10-14 subunits forms the central stalk rotor element with the F(1) delta and epsilon subunits. This chain is ATP synthase subunit c, found in Synechococcus sp. (strain WH7803).